We begin with the raw amino-acid sequence, 123 residues long: 13 kDa major membrane protein (123 aa).

The protein localises to the cell membrane. This is 13 kDa major membrane protein from Francisella tularensis subsp. holarctica (strain LVS).